The chain runs to 298 residues: MHFIMMKLFRVVKRGYYISYAILDNSTIIRLDEDPIKALMRYSENKEVLGDRVTGIDYQSLLKSFQINDIRITKPIDPPEVWGSGISYEMARERYSEENVAKILGKTIYEKVYDAVRPEIFFKATPNRCVGHGEAIAVRSDSEWTLPEPELAVVLDSNGKILGYTIMDDVSARDLEAENPLYLPQSKIYAGCCAFGPVIVTSDEIKNPYSLDITLKIVREGRVFFEGSVNTNKMRRKIEEQIQYLIRDNPIPDGTILTTGTAIVPGRDKGLKDEDIVEITISNIGTLITPVKKRRKIT.

Isoleucine 86 contacts substrate. Mg(2+) contacts are provided by glutamate 148, glutamate 150, and aspartate 169. Substrate contacts are provided by lysine 187 and threonine 261.

It belongs to the FAH family. Homotetramer. It depends on Mg(2+) as a cofactor. Ca(2+) serves as cofactor.

The enzyme catalyses 2-dehydro-3-deoxy-D-arabinonate = 2,5-dioxopentanoate + H2O. Functionally, participates in a pentose oxidation pathway that converts D-arabinonate to 2-oxoglutarate. This Saccharolobus solfataricus (strain ATCC 35092 / DSM 1617 / JCM 11322 / P2) (Sulfolobus solfataricus) protein is 2-dehydro-3-deoxy-D-arabinonate dehydratase.